A 354-amino-acid polypeptide reads, in one-letter code: Histidinol-phosphate aminotransferase (354 aa).

An N6-(pyridoxal phosphate)lysine modification is found at lysine 210.

The protein belongs to the class-II pyridoxal-phosphate-dependent aminotransferase family. Histidinol-phosphate aminotransferase subfamily. As to quaternary structure, homodimer. It depends on pyridoxal 5'-phosphate as a cofactor.

The enzyme catalyses L-histidinol phosphate + 2-oxoglutarate = 3-(imidazol-4-yl)-2-oxopropyl phosphate + L-glutamate. The protein operates within amino-acid biosynthesis; L-histidine biosynthesis; L-histidine from 5-phospho-alpha-D-ribose 1-diphosphate: step 7/9. This is Histidinol-phosphate aminotransferase from Clostridium botulinum (strain Kyoto / Type A2).